A 125-amino-acid chain; its full sequence is Neuraminyllactose-binding hemagglutinin (125 aa).

Residues 92 to 97 (KRTTQK) form an N-acetyl-neuraminyl-alpha(2,3)-lactose binding motif region.

Its subcellular location is the cell outer membrane. The sequence is that of Neuraminyllactose-binding hemagglutinin (hpaA) from Helicobacter acinonychis (Helicobacter acinonyx).